Reading from the N-terminus, the 770-residue chain is Rho guanine nucleotide exchange factor 38 (770 aa).

The tract at residues 33 to 88 (KTDTVVDSSVSGDHSGSLRRSQSDRTEYNQKLQEKMTPQAECSSAETPTPEDEQQV) is disordered. Thr-34 carries the post-translational modification Phosphothreonine. Residues 37-47 (VVDSSVSGDHS) are compositionally biased toward low complexity. Positions 53–66 (SQSDRTEYNQKLQE) are enriched in basic and acidic residues. The region spanning 94 to 285 (KRAKIIRELI…KDINVNINEL (192 aa)) is the DH domain. In terms of domain architecture, BAR spans 327 to 542 (LKILTRGESQ…VHSLTFVKEN (216 aa)). SH3 domains lie at 581–644 (GAEE…PHNP) and 706–769 (VDEQ…KMTY).

May act as a guanine-nucleotide releasing factor. The polypeptide is Rho guanine nucleotide exchange factor 38 (Arhgef38) (Mus musculus (Mouse)).